The following is a 72-amino-acid chain: Translation initiation factor IF-1 (72 aa).

The 72-residue stretch at 1–72 (MAKEDCIEME…SKGRIIYRAR (72 aa)) folds into the S1-like domain.

Belongs to the IF-1 family. In terms of assembly, component of the 30S ribosomal translation pre-initiation complex which assembles on the 30S ribosome in the order IF-2 and IF-3, IF-1 and N-formylmethionyl-tRNA(fMet); mRNA recruitment can occur at any time during PIC assembly.

It is found in the cytoplasm. In terms of biological role, one of the essential components for the initiation of protein synthesis. Stabilizes the binding of IF-2 and IF-3 on the 30S subunit to which N-formylmethionyl-tRNA(fMet) subsequently binds. Helps modulate mRNA selection, yielding the 30S pre-initiation complex (PIC). Upon addition of the 50S ribosomal subunit IF-1, IF-2 and IF-3 are released leaving the mature 70S translation initiation complex. The sequence is that of Translation initiation factor IF-1 from Pseudoalteromonas atlantica (strain T6c / ATCC BAA-1087).